The primary structure comprises 270 residues: UPF0354 protein BCG9842_B0431 (270 aa).

It belongs to the UPF0354 family.

In Bacillus cereus (strain G9842), this protein is UPF0354 protein BCG9842_B0431.